Consider the following 101-residue polypeptide: Small ribosomal subunit protein uS14 (101 aa).

Belongs to the universal ribosomal protein uS14 family. As to quaternary structure, part of the 30S ribosomal subunit. Contacts proteins S3 and S10.

In terms of biological role, binds 16S rRNA, required for the assembly of 30S particles and may also be responsible for determining the conformation of the 16S rRNA at the A site. The sequence is that of Small ribosomal subunit protein uS14 from Saccharophagus degradans (strain 2-40 / ATCC 43961 / DSM 17024).